Consider the following 90-residue polypeptide: Cell division protein CrgA (90 aa).

The segment at 1 to 25 is disordered; it reads MPKARVTKNETAPVSSNPSANRTPV. The segment covering 9-22 has biased composition (polar residues); the sequence is NETAPVSSNPSANR. Helical transmembrane passes span 38 to 58 and 67 to 87; these read VIMF…YLVG and LGAW…LMTM.

It belongs to the CrgA family.

It is found in the cell membrane. In terms of biological role, involved in cell division. The protein is Cell division protein CrgA of Corynebacterium glutamicum (strain R).